Here is a 259-residue protein sequence, read N- to C-terminus: Tonin (259 aa).

The N-terminal stretch at 1–18 (MWLQILSLVLSVGRIDAA) is a signal peptide. The propeptide at 19-24 (PPGQSR) is activation peptide. The region spanning 25 to 256 (IVGGYKCEKN…FTSWIKKVMK (232 aa)) is the Peptidase S1 domain. Intrachain disulfides connect Cys-31–Cys-171, Cys-48–Cys-64, Cys-150–Cys-217, Cys-182–Cys-196, and Cys-207–Cys-232. His-63 acts as the Charge relay system in catalysis. Residue His-63 participates in Zn(2+) binding. Asn-106 carries N-linked (GlcNAc...) asparagine glycosylation. Zn(2+)-binding residues include His-113 and His-115. The active-site Charge relay system is Asp-118. Asn-189 carries N-linked (GlcNAc...) asparagine glycosylation. Ser-211 functions as the Charge relay system in the catalytic mechanism.

It belongs to the peptidase S1 family. Kallikrein subfamily. As to quaternary structure, monomer. Zn(2+) is required as a cofactor. In terms of tissue distribution, found in submaxillary gland.

The enzyme catalyses Preferential cleavage of Arg-|-Xaa bonds in small molecule substrates. Highly selective action to release kallidin (lysyl-bradykinin) from kininogen involves hydrolysis of Met-|-Xaa or Leu-|-Xaa.. Functionally, this protein has both trypsin- and chymotrypsin-like activities, being able to release angiotensin II from angiotensin I or angiotensinogen. In Rattus norvegicus (Rat), this protein is Tonin (Klk2).